Reading from the N-terminus, the 1114-residue chain is Probable guanine nucleotide exchange factor MCF2L2 (1114 aa).

The CRAL-TRIO domain maps to 11–193; the sequence is PQELTRRLAT…ELGGTLEYRH (183 aa). Residues 323-428 form a Spectrin repeat; it reads QHFEHDFCKA…KWDILGKSLE (106 aa). A disordered region spans residues 530–614; sequence QTRPVQPVAP…NPELEQQARL (85 aa). Residues 546–559 are compositionally biased toward polar residues; it reads KWVSSKTSQPSTSV. Residues 577-606 show a composition bias toward basic and acidic residues; the sequence is LNSRGKEDDETKFEVKSEEIFESHHERGNP. The 204-residue stretch at 619–822 folds into the DH domain; sequence PRRRIIRDLL…EDLIKSCELA (204 aa). The region spanning 834 to 954 is the PH domain; sequence DIGKLGKLLL…WFSEISKLLM (121 aa). The span at 962-975 shows a compositional bias: polar residues; sequence DQGNPQFEMSTSKG. The interval 962–1114 is disordered; that stretch reads DQGNPQFEMS…LRPRTSAQES (153 aa). The span at 986–997 shows a compositional bias: basic and acidic residues; the sequence is NMERATTSKEDP. Positions 1017–1028 are enriched in acidic residues; that stretch reads TFEDCEGAEDME. 2 stretches are compositionally biased toward basic and acidic residues: residues 1043 to 1067 and 1074 to 1084; these read DDSHETCSSKSAFLERGESSQGEKE and TATRSTEEERA.

Belongs to the MCF2 family. In terms of tissue distribution, significantly expressed in brain and modestly in pancreas, brain and testis.

Its function is as follows. Probably functions as a guanine nucleotide exchange factor. The protein is Probable guanine nucleotide exchange factor MCF2L2 (MCF2L2) of Homo sapiens (Human).